Consider the following 1024-residue polypeptide: Protein translocase subunit SecA (1024 aa).

Residues Gln-143, 161–165 (GEGKT), and Asp-661 each bind ATP. Residues 970-1024 (HEEAGSVYNAQPDGEPESQASKQQPVVADHSKPGRNDLCPCGSGKKYKNCHGREA) are disordered. 4 residues coordinate Zn(2+): Cys-1008, Cys-1010, Cys-1019, and His-1020. Over residues 1014-1024 (KKYKNCHGREA) the composition is skewed to basic residues.

The protein belongs to the SecA family. Monomer and homodimer. Part of the essential Sec protein translocation apparatus which comprises SecA, SecYEG and auxiliary proteins SecDF. Other proteins may also be involved. Zn(2+) serves as cofactor.

The protein resides in the cell inner membrane. Its subcellular location is the cytoplasm. The catalysed reaction is ATP + H2O + cellular proteinSide 1 = ADP + phosphate + cellular proteinSide 2.. In terms of biological role, part of the Sec protein translocase complex. Interacts with the SecYEG preprotein conducting channel. Has a central role in coupling the hydrolysis of ATP to the transfer of proteins into and across the cell membrane, serving as an ATP-driven molecular motor driving the stepwise translocation of polypeptide chains across the membrane. This is Protein translocase subunit SecA from Chlorobium luteolum (strain DSM 273 / BCRC 81028 / 2530) (Pelodictyon luteolum).